We begin with the raw amino-acid sequence, 99 residues long: Ubiquitin-related modifier 1 homolog (99 aa).

Glycine 99 carries the post-translational modification 1-thioglycine. Residue glycine 99 forms a Glycyl lysine isopeptide (Gly-Lys) (interchain with K-? in acceptor proteins) linkage.

It belongs to the URM1 family. In terms of assembly, interacts with cer. Post-translationally, C-terminal thiocarboxylation occurs in 2 steps, it is first acyl-adenylated (-COAMP) via the hesA/moeB/thiF part of the MOCS3 homolog, then thiocarboxylated (-COSH) via the rhodanese domain of the MOCS3 homolog.

The protein resides in the cytoplasm. The protein operates within tRNA modification; 5-methoxycarbonylmethyl-2-thiouridine-tRNA biosynthesis. In terms of biological role, acts as a sulfur carrier required for 2-thiolation of mcm(5)S(2)U at tRNA wobble positions of cytosolic tRNA(Lys), tRNA(Glu) and tRNA(Gln). Serves as sulfur donor in tRNA 2-thiolation reaction by being thiocarboxylated (-COSH) at its C-terminus by MOCS3. The sulfur is then transferred to tRNA to form 2-thiolation of mcm(5)S(2)U. Also acts as a ubiquitin-like protein (UBL) that is covalently conjugated via an isopeptide bond to lysine residues of target proteins such as Prx2/Jafrac1, Ciao1, Eip71CD and GILT1. The thiocarboxylated form serves as substrate for conjugation and oxidative stress specifically induces the formation of UBL-protein conjugates. The sequence is that of Ubiquitin-related modifier 1 homolog from Drosophila virilis (Fruit fly).